We begin with the raw amino-acid sequence, 416 residues long: 2,3-bisphosphoglycerate-independent phosphoglycerate mutase (416 aa).

It belongs to the BPG-independent phosphoglycerate mutase family. A-PGAM subfamily.

The enzyme catalyses (2R)-2-phosphoglycerate = (2R)-3-phosphoglycerate. It participates in carbohydrate degradation; glycolysis; pyruvate from D-glyceraldehyde 3-phosphate: step 3/5. Its function is as follows. Catalyzes the interconversion of 2-phosphoglycerate and 3-phosphoglycerate. This chain is 2,3-bisphosphoglycerate-independent phosphoglycerate mutase, found in Ignicoccus hospitalis (strain KIN4/I / DSM 18386 / JCM 14125).